The primary structure comprises 510 residues: 2,3-bisphosphoglycerate-independent phosphoglycerate mutase (510 aa).

The Mn(2+) site is built by D12 and S62. S62 functions as the Phosphoserine intermediate in the catalytic mechanism. Substrate contacts are provided by residues H123, R152 to D153, R184, R190, R257 to R260, and K331. Residues D399, H403, D440, H441, and H458 each contribute to the Mn(2+) site.

Belongs to the BPG-independent phosphoglycerate mutase family. Monomer. It depends on Mn(2+) as a cofactor.

It carries out the reaction (2R)-2-phosphoglycerate = (2R)-3-phosphoglycerate. The protein operates within carbohydrate degradation; glycolysis; pyruvate from D-glyceraldehyde 3-phosphate: step 3/5. Its function is as follows. Catalyzes the interconversion of 2-phosphoglycerate and 3-phosphoglycerate. This Lawsonia intracellularis (strain PHE/MN1-00) protein is 2,3-bisphosphoglycerate-independent phosphoglycerate mutase.